The primary structure comprises 176 residues: Large ribosomal subunit protein uL16 (176 aa).

The protein belongs to the universal ribosomal protein uL16 family.

In Thermoplasma volcanium (strain ATCC 51530 / DSM 4299 / JCM 9571 / NBRC 15438 / GSS1), this protein is Large ribosomal subunit protein uL16.